A 684-amino-acid polypeptide reads, in one-letter code: Methionine--tRNA ligase (684 aa).

Residues 17–27 (PYANGKAHVGH) carry the 'HIGH' region motif. Zn(2+)-binding residues include Cys148, Cys151, Cys160, and Cys164. The 'KMSKS' region signature appears at 330-334 (TFSKS). Lys333 serves as a coordination point for ATP. In terms of domain architecture, tRNA-binding spans 582-684 (DFSKLDIRIG…KETNPGTCIH (103 aa)).

This sequence belongs to the class-I aminoacyl-tRNA synthetase family. MetG type 1 subfamily. As to quaternary structure, homodimer. Zn(2+) is required as a cofactor.

It localises to the cytoplasm. The catalysed reaction is tRNA(Met) + L-methionine + ATP = L-methionyl-tRNA(Met) + AMP + diphosphate. In terms of biological role, is required not only for elongation of protein synthesis but also for the initiation of all mRNA translation through initiator tRNA(fMet) aminoacylation. The sequence is that of Methionine--tRNA ligase from Methanococcoides burtonii (strain DSM 6242 / NBRC 107633 / OCM 468 / ACE-M).